Reading from the N-terminus, the 163-residue chain is UPF0478 protein SAB1599c (163 aa).

A helical membrane pass occupies residues 7–27 (IAGIIAAIAFLILCIGIVAVL).

Belongs to the UPF0478 family.

The protein localises to the cell membrane. This chain is UPF0478 protein SAB1599c, found in Staphylococcus aureus (strain bovine RF122 / ET3-1).